A 438-amino-acid polypeptide reads, in one-letter code: MSDETFVITGAMLADGSRTDLLLAGGRIQETGVRLSAAGATVVDADGLLALPGLVDLHTHLREPGYEQSETVLTGTRAAAAGGFTEVFAMANTSPVADTAGVVEQVLSLGEAAGYATVRPIGAVTVGLEGERLAELGAMADSRARVRVFSDDGKCVSDPLLMRRALEYVKAFDGVIAQHAQEPRITAGAQMNEGALSGELGLAGWPAVAEESIIARDVLLAEHVGSRLHVCHVSTAGSVDVIRWAKARGIDVTAEVTPHHLLLTEELVSGYDARYKVNPPLRRSEDVEALRAGLADGTIDIVATDHAPHPVEAKDCEWDAAAFGMVGLESALSVVQSSVVDTGMLGWADIARVLSATPARIGRLAGHGTPVEAGAPAELFLYDPAAAREFSTGELAGKGVNSPYLSMTLSGRVVATFHRGYATVLDGAVLESVGGARG.

Zn(2+)-binding residues include histidine 58 and histidine 60. Residues 60–62 (HLR) and asparagine 92 contribute to the substrate site. The Zn(2+) site is built by aspartate 152, histidine 179, and histidine 232. Asparagine 278 lines the substrate pocket. Residue aspartate 305 coordinates Zn(2+). The active site involves aspartate 305. Substrate-binding positions include histidine 309 and 323–324 (FG).

It belongs to the metallo-dependent hydrolases superfamily. DHOase family. Class I DHOase subfamily. Zn(2+) serves as cofactor.

It carries out the reaction (S)-dihydroorotate + H2O = N-carbamoyl-L-aspartate + H(+). It participates in pyrimidine metabolism; UMP biosynthesis via de novo pathway; (S)-dihydroorotate from bicarbonate: step 3/3. Its function is as follows. Catalyzes the reversible cyclization of carbamoyl aspartate to dihydroorotate. This Leifsonia xyli subsp. xyli (strain CTCB07) protein is Dihydroorotase.